Reading from the N-terminus, the 254-residue chain is CRISPR-associated endonuclease Cas1 (254 aa).

Mn(2+)-binding residues include E78, H146, and E161.

The protein belongs to the CRISPR-associated endonuclease Cas1 family. Homodimer, forms a heterotetramer with a Cas2 homodimer. It depends on Mg(2+) as a cofactor. Mn(2+) is required as a cofactor.

Its function is as follows. CRISPR (clustered regularly interspaced short palindromic repeat), is an adaptive immune system that provides protection against mobile genetic elements (viruses, transposable elements and conjugative plasmids). CRISPR clusters contain spacers, sequences complementary to antecedent mobile elements, and target invading nucleic acids. CRISPR clusters are transcribed and processed into CRISPR RNA (crRNA). Acts as a dsDNA endonuclease. Involved in the integration of spacer DNA into the CRISPR cassette. This Leptospira interrogans serogroup Icterohaemorrhagiae serovar Lai (strain 56601) protein is CRISPR-associated endonuclease Cas1.